Consider the following 523-residue polypeptide: MAGSTSASLQTPYFPSSTQINPVRVDHTLPLPPSQPSLSFTQGLLVGQLSVVLLIGAFIKFFIFGEAPPPPSRGLSNRTSTHPRSYSINAASTDSSPRPLREKPSTSNILRPVPSSSTNTRSILRKTYYSATPTHPTPKHGRPRLYHSSHQPESLDWFNVLIAQTIAQYRQTAYILKDSPTSSILASLSETLNNPEKKPSFIDIIKVTDISLGEEFPIFSNCRVIAVEDPNSDGGRLQALMDVDLSDDNLSLAIETSLLLNYPKPFSAVLPVALAVSVVRFSGTLCISFVPGPRTSDQTMSPIPTPHDTTSEAIDDQSSDQPSPAQNPDGPKDAHANTSNTTDASSKHGIPKTSLAFSFLPDYRLDLSVRSLIGSRSRLQDVPKVAQLVEARVQSWFEERVVEPRVQVVGLPNIWPRMGRTGLRSSQEEPEAGSGSVEIPVMTSPGADGVSGGGGSGGGSGGGGGGMRGIDRGLSGREAGYEALRYRHAACGGHQNQSGRDGGRGGNEQFAMPGSMPDTVTET.

Over 1–43 the chain is Lumenal; the sequence is MAGSTSASLQTPYFPSSTQINPVRVDHTLPLPPSQPSLSFTQG. A helical membrane pass occupies residues 44-64; that stretch reads LLVGQLSVVLLIGAFIKFFIF. The Cytoplasmic segment spans residues 65–523; sequence GEAPPPPSRG…GSMPDTVTET (459 aa). Disordered stretches follow at residues 70–118, 128–147, 295–349, 420–474, and 492–523; these read PPSR…SSST, YYSA…RLYH, TSDQ…SKHG, RTGL…DRGL, and GGHQ…VTET. 2 stretches are compositionally biased toward polar residues: residues 74–96 and 105–118; these read GLSN…TDSS and STSN…SSST. The segment covering 137–147 has biased composition (basic residues); sequence TPKHGRPRLYH. In terms of domain architecture, SMP-LTD spans 151-412; that stretch reads QPESLDWFNV…EPRVQVVGLP (262 aa). Residues 295–312 are compositionally biased toward polar residues; that stretch reads TSDQTMSPIPTPHDTTSE. Residues 449-468 are compositionally biased toward gly residues; sequence GVSGGGGSGGGSGGGGGGMR.

Belongs to the MMM1 family. In terms of assembly, homodimer. Component of the ER-mitochondria encounter structure (ERMES) or MDM complex, composed of MMM1, MDM10, MDM12 and MDM34. An MMM1 homodimer associates with one molecule of MDM12 on each side in a pairwise head-to-tail manner, and the SMP-LTD domains of MMM1 and MDM12 generate a continuous hydrophobic tunnel for phospholipid trafficking.

The protein resides in the endoplasmic reticulum membrane. Its function is as follows. Component of the ERMES/MDM complex, which serves as a molecular tether to connect the endoplasmic reticulum (ER) and mitochondria. Components of this complex are involved in the control of mitochondrial shape and protein biogenesis, and function in nonvesicular lipid trafficking between the ER and mitochondria. The MDM12-MMM1 subcomplex functions in the major beta-barrel assembly pathway that is responsible for biogenesis of all outer membrane beta-barrel proteins, and acts in a late step after the SAM complex. The MDM10-MDM12-MMM1 subcomplex further acts in the TOM40-specific pathway after the action of the MDM12-MMM1 complex. Essential for establishing and maintaining the structure of mitochondria and maintenance of mtDNA nucleoids. The sequence is that of Maintenance of mitochondrial morphology protein 1 from Paracoccidioides lutzii (strain ATCC MYA-826 / Pb01) (Paracoccidioides brasiliensis).